A 235-amino-acid polypeptide reads, in one-letter code: MSKNSKAYREAAEKVDREKLYTPLEATKLAKETSSKKYDATVEVAMRLGVDPRKADQMVRGTVNLPHGTGKTARVIVFAVGDKAEAAAAAGADVVGSDDLIERIQGGWVDFDAAIATPDQMAKVGRIARVLGPRGLMPNPKTGTVTPDVAKAVTDIKGGKINFRVDKHSNLHLIIGKASFDAEKLTENYGAVLDEILRAKPSSAKGRYLKKVVVSTTTGPGIQVDPGVTRNFLEA.

Belongs to the universal ribosomal protein uL1 family. As to quaternary structure, part of the 50S ribosomal subunit.

Binds directly to 23S rRNA. The L1 stalk is quite mobile in the ribosome, and is involved in E site tRNA release. Functionally, protein L1 is also a translational repressor protein, it controls the translation of the L11 operon by binding to its mRNA. The protein is Large ribosomal subunit protein uL1 of Mycobacteroides abscessus (strain ATCC 19977 / DSM 44196 / CCUG 20993 / CIP 104536 / JCM 13569 / NCTC 13031 / TMC 1543 / L948) (Mycobacterium abscessus).